The sequence spans 548 residues: CTP synthase (548 aa).

Residues 1-270 (MTKYVFVTGG…DNIVCEALGL (270 aa)) form an amidoligase domain region. CTP is bound at residue S13. S13 serves as a coordination point for UTP. ATP is bound by residues 14–19 (SLGKGI) and D71. Mg(2+)-binding residues include D71 and E144. CTP contacts are provided by residues 151 to 153 (DIE), 191 to 196 (KTKPTQ), and K227. UTP is bound by residues 191–196 (KTKPTQ) and K227. A Glutamine amidotransferase type-1 domain is found at 295–545 (TIGMVGKYVD…IEAAIANHAR (251 aa)). G356 provides a ligand contact to L-glutamine. Catalysis depends on C383, which acts as the Nucleophile; for glutamine hydrolysis. L-glutamine-binding positions include 384-387 (LGMQ), E407, and R473. Catalysis depends on residues H518 and E520.

Belongs to the CTP synthase family. Homotetramer.

The catalysed reaction is UTP + L-glutamine + ATP + H2O = CTP + L-glutamate + ADP + phosphate + 2 H(+). The enzyme catalyses L-glutamine + H2O = L-glutamate + NH4(+). It carries out the reaction UTP + NH4(+) + ATP = CTP + ADP + phosphate + 2 H(+). It participates in pyrimidine metabolism; CTP biosynthesis via de novo pathway; CTP from UDP: step 2/2. Its activity is regulated as follows. Allosterically activated by GTP, when glutamine is the substrate; GTP has no effect on the reaction when ammonia is the substrate. The allosteric effector GTP functions by stabilizing the protein conformation that binds the tetrahedral intermediate(s) formed during glutamine hydrolysis. Inhibited by the product CTP, via allosteric rather than competitive inhibition. In terms of biological role, catalyzes the ATP-dependent amination of UTP to CTP with either L-glutamine or ammonia as the source of nitrogen. Regulates intracellular CTP levels through interactions with the four ribonucleotide triphosphates. The polypeptide is CTP synthase (Bordetella petrii (strain ATCC BAA-461 / DSM 12804 / CCUG 43448)).